Reading from the N-terminus, the 1165-residue chain is Protein hsr-9 (1165 aa).

Disordered regions lie at residues 1 to 26 (MASS…PTTT), 70 to 578 (AEDE…TEME), 608 to 713 (KYSM…IPLK), and 874 to 913 (TRAR…EEEE). Positions 16–26 (TVTQTSLPTTT) are enriched in low complexity. Basic and acidic residues-rich tracts occupy residues 98 to 114 (KDAK…KSES), 123 to 140 (TFEK…KLDI), and 149 to 162 (DTEK…KVVG). Composition is skewed to acidic residues over residues 163–179 (DEDE…DEDE), 211–230 (EKEE…EVEV), and 280–289 (GESEANEENQ). Polar residues predominate over residues 306–317 (ATVSSTPSSNTP). Residues 397-408 (NTEHPTEEETPK) are compositionally biased toward basic and acidic residues. Positions 415-431 (SAASSSATSSAVPTPRS) are enriched in low complexity. Basic and acidic residues predominate over residues 446 to 461 (LQEKETEDPTKTHDTN). Positions 533–543 (DPIEEADETIE) are enriched in acidic residues. The span at 554–563 (AAKSAPSSSK) shows a compositional bias: low complexity. Composition is skewed to basic and acidic residues over residues 662 to 671 (KKEEEHHEND) and 694 to 708 (SEAS…KKEP). A BRCT domain is found at 923–1028 (IGKNIFTGKV…KCVDYTDYVL (106 aa)).

Expressed in germ cells.

It is found in the nucleus. May have a role in DNA double-strand break repair following gamma-irradiation. The protein is Protein hsr-9 of Caenorhabditis elegans.